A 121-amino-acid polypeptide reads, in one-letter code: Large ribosomal subunit protein uL18 (121 aa).

It belongs to the universal ribosomal protein uL18 family. Part of the 50S ribosomal subunit; part of the 5S rRNA/L5/L18/L25 subcomplex. Contacts the 5S and 23S rRNAs.

Its function is as follows. This is one of the proteins that bind and probably mediate the attachment of the 5S RNA into the large ribosomal subunit, where it forms part of the central protuberance. The sequence is that of Large ribosomal subunit protein uL18 from Roseiflexus castenholzii (strain DSM 13941 / HLO8).